Here is a 349-residue protein sequence, read N- to C-terminus: Protein-glutamate methylesterase/protein-glutamine glutaminase 3 (349 aa).

A Response regulatory domain is found at 2 to 119; the sequence is DVLIVDDSPV…HPDFERDVES (118 aa). 4-aspartylphosphate is present on Asp52. Residues 157 to 340 enclose the CheB-type methylesterase domain; it reads EGFQPGVIAI…LSPPRIAALL (184 aa). Catalysis depends on residues Ser169, His196, and Asp289.

The protein belongs to the CheB family. In terms of processing, phosphorylated by CheA. Phosphorylation of the N-terminal regulatory domain activates the methylesterase activity.

The protein resides in the cytoplasm. It catalyses the reaction [protein]-L-glutamate 5-O-methyl ester + H2O = L-glutamyl-[protein] + methanol + H(+). The enzyme catalyses L-glutaminyl-[protein] + H2O = L-glutamyl-[protein] + NH4(+). Its function is as follows. Involved in chemotaxis. Part of a chemotaxis signal transduction system that modulates chemotaxis in response to various stimuli. Catalyzes the demethylation of specific methylglutamate residues introduced into the chemoreceptors (methyl-accepting chemotaxis proteins or MCP) by CheR. Also mediates the irreversible deamidation of specific glutamine residues to glutamic acid. This is Protein-glutamate methylesterase/protein-glutamine glutaminase 3 from Hahella chejuensis (strain KCTC 2396).